Here is a 470-residue protein sequence, read N- to C-terminus: uncharacterized protein (470 aa).

The stretch at 418–453 forms a coiled coil; the sequence is SECCEEQEEKEKKKEKEKEKKKEKDDDDDQQNNNNN. A disordered region spans residues 423–470; it reads EQEEKEKKKEKEKEKKKEKDDDDDQQNNNNNDQNGLGLGLGLNFGLNL. The segment covering 426 to 441 has biased composition (basic and acidic residues); it reads EKEKKKEKEKEKKKEK. Residues 448-457 show a composition bias toward low complexity; it reads QNNNNNDQNG.

This is an uncharacterized protein from Acidianus bottle-shaped virus (isolate Italy/Pozzuoli) (ABV).